Consider the following 126-residue polypeptide: Putative lipoprotein LprD (126 aa).

The first 19 residues, 1–19 (MSTTRRRRPALVALVTIAA), serve as a signal peptide directing secretion. Residue Cys-20 is the site of N-palmitoyl cysteine attachment. Residue Cys-20 is the site of S-diacylglycerol cysteine attachment. The chain crosses the membrane as a helical span at residues 44-64 (GYALQWPLFAGFCLYTYHNFV).

The protein to M.tuberculosis Rv1343c.

It localises to the cell membrane. This is Putative lipoprotein LprD (lprD) from Mycobacterium leprae (strain TN).